The chain runs to 152 residues: Transcriptional regulator MraZ (152 aa).

SpoVT-AbrB domains are found at residues 5 to 52 and 81 to 124; these read ASAI…PIHE and AHEV…DEQA.

It belongs to the MraZ family. As to quaternary structure, forms oligomers.

It is found in the cytoplasm. The protein resides in the nucleoid. This chain is Transcriptional regulator MraZ, found in Shewanella sp. (strain ANA-3).